The sequence spans 722 residues: MFNKHSVEIDWGGRPLRLETGKVARQADGAVVATYGETVVLATVVAAKTPREGVDFLPLTVDYQEKTYAAGRIPGGYFKREGRPTEKETLVSRLIDRPIRPLFADGWRNETQVIVTVLSHDMENDPDILALVASSAALTLSGAPFKGPIGAARVGFINDEYVLNPVLDEMPETQLDLVVAGTSDAVLMVESEAKELSEEIMLGAVMFGHRHFQPVIDAIIALAEKAAKEPRELTVIDDSAIEKEMLGLVEQELRAAYAIAVKQERYAAVGKVKEKAIAHFFPEGQEPKYDKLRIAGVFKELEAKIVRWNILDTGKRIDGRDSKTVRSIIAEAGVLPRAHGSALFTRGETQALVVTTLGTGEDEQYVDSLAGTYKETFLLHYNFPPYSVGETGRLGGTKRREIGHGKLAWRAIRPVLPPHHEFPYTIRVVSEITESNGSSSMASVCGASLALMDAGVPLKRPTAGIAMGLILEGERFAVLSDILGDEDHLGDMDFKVAGTEQGVTSLQMDIKIAGITEEIMKVALGQAKDGRIHILGEMSKALDRARAELGEHAPRIETFKIPTDKIREVIGTGGKVIREIVEKTGAKVNIEDDGTVKVASSDGESIKAAIKWIKSIASDPEVGEIYEGTVVKVMEFGAFVNFFGAKDGLVHISQLAAGRVQKTSDVVKEGDKVKVKLLGFDDRGKTRLSMKVVDQDTGEDLEAKQKAEAKAEDEAPAQAAGE.

The Mg(2+) site is built by Asp487 and Asp493. The 60-residue stretch at 554 to 613 folds into the KH domain; that stretch reads PRIETFKIPTDKIREVIGTGGKVIREIVEKTGAKVNIEDDGTVKVASSDGESIKAAIKWI. The region spanning 623 to 691 is the S1 motif domain; sequence GEIYEGTVVK…DRGKTRLSMK (69 aa). The disordered stretch occupies residues 691–722; it reads KVVDQDTGEDLEAKQKAEAKAEDEAPAQAAGE. Residues 701–713 are compositionally biased toward basic and acidic residues; it reads LEAKQKAEAKAED.

This sequence belongs to the polyribonucleotide nucleotidyltransferase family. Mg(2+) is required as a cofactor.

It localises to the cytoplasm. It carries out the reaction RNA(n+1) + phosphate = RNA(n) + a ribonucleoside 5'-diphosphate. In terms of biological role, involved in mRNA degradation. Catalyzes the phosphorolysis of single-stranded polyribonucleotides processively in the 3'- to 5'-direction. The chain is Polyribonucleotide nucleotidyltransferase from Rhodopseudomonas palustris (strain BisB5).